A 548-amino-acid polypeptide reads, in one-letter code: 5-epi-aristolochene synthase 2 (548 aa).

The Mg(2+) site is built by Asp301, Asp305, Asp444, Thr448, and Glu452. The short motif at 301–305 is the DDXXD motif element; sequence DDTFD.

This sequence belongs to the terpene synthase family. In terms of assembly, monomer. The cofactor is Mg(2+). Expressed in roots, but not in shoots.

Its subcellular location is the cytoplasm. It carries out the reaction (2E,6E)-farnesyl diphosphate = (+)-5-epi-aristolochene + diphosphate. It functions in the pathway secondary metabolite biosynthesis; terpenoid biosynthesis. Catalyzes the cyclization of trans,trans-farnesyl diphosphate (FPP) to the bicyclic intermediate 5-epi-aristolochene, initial step in the conversion of FPP to the sesquiterpenoid antifungal phytoalexin capsidiol. Produces germacrene A as an enzyme-bound intermediate that is not released by the enzyme, but is further cyclized to produce the bicyclic 5-epi-aristolochene. This is 5-epi-aristolochene synthase 2 from Nicotiana attenuata (Coyote tobacco).